Here is a 538-residue protein sequence, read N- to C-terminus: Inositol phosphate phosphatase IpgD (538 aa).

Cys439 is a catalytic residue. A CX5R motif motif is present at residues 439–445; the sequence is CKSGKDR.

It belongs to the phosphatase IpgD/SopB family.

The protein resides in the secreted. It catalyses the reaction a 1,2-diacyl-sn-glycero-3-phospho-(1D-myo-inositol-4,5-bisphosphate) + H2O = a 1,2-diacyl-sn-glycero-3-phospho-(1D-myo-inositol-5-phosphate) + phosphate. Its function is as follows. Converts phosphatidylinositol 4,5-bisphosphate (PtdIns 4,5-P2) to PtdIns 5-P. IpgD is injected by Shigella into the host cell and is required for invasion. The accumulation of PtdIns 5-P causes membrane ruffling and actin cytoskeleton rearrangements at the entry site. In Shigella sonnei, this protein is Inositol phosphate phosphatase IpgD (ipgD).